We begin with the raw amino-acid sequence, 710 residues long: E3 ubiquitin-protein ligase TRIM9 (710 aa).

The RING-type zinc-finger motif lies at 10–50; it reads CPVCGSFYREPIILPCSHNLCQACARNILVQTPESESPQSH. Threonine 41 bears the Phosphothreonine mark. 3 positions are modified to phosphoserine: serine 44, serine 46, and serine 49. 2 B box-type zinc fingers span residues 163–212 and 224–266; these read AAAL…LVPP and RKVS…VKAL. The Zn(2+) site is built by cysteine 168, cysteine 171, cysteine 193, histidine 198, cysteine 229, histidine 232, cysteine 252, and histidine 258. Positions 273–340 form a coiled coil; sequence HKSQLSQALN…KAQLLARVNK (68 aa). The COS domain maps to 374–432; it reads IKENDPSGFLQISDALIRRVHLTEDQWGKGTLTPRMTTDFDLSLDNSPLLQSIHQLDFV. One can recognise a Fibronectin type-III domain in the interval 440-535; the sequence is VPATPILQLE…KTLVLQTSEV (96 aa). In terms of domain architecture, B30.2/SPRY spans 533 to 702; that stretch reads SEVAWFAFDP…LHTGLPVPDF (170 aa).

It belongs to the TRIM/RBCC family. Interacts with SNAP25. Post-translationally, auto-ubiquitinated. Poly-ubiquitinated in cultured cells, whereas it is monoubiquitinated in vitro. As to expression, brain. Highly expressed in the cerebral cortex (at protein level). Severely decreased in the affected brain areas in Parkinson disease and dementia with Lewy bodies.

Its subcellular location is the cytoplasm. The protein localises to the cell projection. It is found in the dendrite. The protein resides in the cytoplasmic vesicle. It localises to the secretory vesicle. Its subcellular location is the synaptic vesicle. The protein localises to the synapse. It is found in the cytoskeleton. It carries out the reaction S-ubiquitinyl-[E2 ubiquitin-conjugating enzyme]-L-cysteine + [acceptor protein]-L-lysine = [E2 ubiquitin-conjugating enzyme]-L-cysteine + N(6)-ubiquitinyl-[acceptor protein]-L-lysine.. It participates in protein modification; protein ubiquitination. E3 ubiquitin-protein ligase which ubiquitinates itself in cooperation with an E2 enzyme UBE2D2/UBC4 and serves as a targeting signal for proteasomal degradation. May play a role in regulation of neuronal functions and may also participate in the formation or breakdown of abnormal inclusions in neurodegenerative disorders. May act as a regulator of synaptic vesicle exocytosis by controlling the availability of SNAP25 for the SNARE complex formation. This Homo sapiens (Human) protein is E3 ubiquitin-protein ligase TRIM9 (TRIM9).